The following is a 264-amino-acid chain: Thiazole synthase (264 aa).

The active-site Schiff-base intermediate with DXP is lysine 106. 1-deoxy-D-xylulose 5-phosphate contacts are provided by residues glycine 167, 193–194 (AG), and 215–216 (NS).

Belongs to the ThiG family. As to quaternary structure, homotetramer. Forms heterodimers with either ThiH or ThiS.

Its subcellular location is the cytoplasm. It carries out the reaction [ThiS sulfur-carrier protein]-C-terminal-Gly-aminoethanethioate + 2-iminoacetate + 1-deoxy-D-xylulose 5-phosphate = [ThiS sulfur-carrier protein]-C-terminal Gly-Gly + 2-[(2R,5Z)-2-carboxy-4-methylthiazol-5(2H)-ylidene]ethyl phosphate + 2 H2O + H(+). It functions in the pathway cofactor biosynthesis; thiamine diphosphate biosynthesis. In terms of biological role, catalyzes the rearrangement of 1-deoxy-D-xylulose 5-phosphate (DXP) to produce the thiazole phosphate moiety of thiamine. Sulfur is provided by the thiocarboxylate moiety of the carrier protein ThiS. In vitro, sulfur can be provided by H(2)S. This is Thiazole synthase from Pseudomonas savastanoi pv. phaseolicola (strain 1448A / Race 6) (Pseudomonas syringae pv. phaseolicola (strain 1448A / Race 6)).